The primary structure comprises 785 residues: MAEWQTECMLPPTQPGFEGVGPHPGRVLQNTSGNIQSYSDTLAHTDPTGRDDHFSHYGFKYPHQPPVPTHPMPTTTGLHPQQVINNRFHTKKLRRLQSLGPNLIGPRRTRSYLKSQKYIEYRARPRRDTGKDGEPVWSDELEDAFQQALEANPPMGRRKWSERGKSYGRNELIAEYIYKTTGKRRSRKQVSSHLQVLDSFLKGDPDWERLVREQPADRSNGQPPSAGPRWRNSLELPFSSHYNSHNYPSYHDSLRPVQSYSGELPPPHVVFHPNLHAEATNINKIYGLSFDMWVSAPNQPGGIESAFHLYTRLQGDQRHPAPPKRLENIPNWRTSFPHLNSVMADVNNPLNCDIILLEANLRLMDDFPPSGSKLGIQLELDFTQPPNGDALTNQMENWSCSTYIYEEGQNIYRARQDLPKQQSNKVKPPFESTWWAKRFTELTEIAKDRQLNELADRQTRDYFRTLTAVQEIRATPSSRRVSNQYPDNSQDDSKRMAILLWQFRQTRSNEVGTTTWRRVTSPSSDRNTIPSPKPVTGIDLPPLSFYANSLARPAPSIYQAPQSHDLVHHNGTSQPQWSMYQPPQDSIFNANGGFDLLNSITKPEGGLHDKTAVTSVLDTYPNLQPEVSQPTSLNGSNGGPGMLSIPDMSLSHTNLNAYNLSGHDNHYGTPQHPGVSVPDNSHVLNNGIFGSSTQSIDDMSQTHAPWPTPTSSITDVGSSNYSHLQFSDHHVPSVSRESHQPNHFEVLLGPDDLIVGSMPGDPGINGAAHGHMNHTYTENNAVEAA.

The disordered stretch occupies residues 1-22 (MAEWQTECMLPPTQPGFEGVGP). The segment at residues 130–204 (GKDGEPVWSD…QVLDSFLKGD (75 aa)) is a DNA-binding region (TEA). The disordered stretch occupies residues 213–232 (EQPADRSNGQPPSAGPRWRN).

It belongs to the TEC1 family.

The protein localises to the nucleus. In terms of biological role, brlA, abaA and wetA are pivotal regulators of conidiophore development and conidium maturation. They act individually and together to regulate their own expression and that of numerous other sporulation-specific genes. Binds to the sequence 5'-CATTCY-3', where Y is a pyrimidine, making both major- and minor-groove contacts. Controls expression of wetA. The chain is Conidiophore development regulator abaA from Aspergillus oryzae (strain ATCC 42149 / RIB 40) (Yellow koji mold).